A 179-amino-acid polypeptide reads, in one-letter code: Large ribosomal subunit protein uL5 (179 aa).

This sequence belongs to the universal ribosomal protein uL5 family. Part of the 50S ribosomal subunit; part of the 5S rRNA/L5/L18/L25 subcomplex. Contacts the 5S rRNA and the P site tRNA. Forms a bridge to the 30S subunit in the 70S ribosome.

This is one of the proteins that bind and probably mediate the attachment of the 5S RNA into the large ribosomal subunit, where it forms part of the central protuberance. In the 70S ribosome it contacts protein S13 of the 30S subunit (bridge B1b), connecting the 2 subunits; this bridge is implicated in subunit movement. Contacts the P site tRNA; the 5S rRNA and some of its associated proteins might help stabilize positioning of ribosome-bound tRNAs. This chain is Large ribosomal subunit protein uL5, found in Pseudomonas savastanoi pv. phaseolicola (strain 1448A / Race 6) (Pseudomonas syringae pv. phaseolicola (strain 1448A / Race 6)).